Reading from the N-terminus, the 472-residue chain is tRNA-2-methylthio-N(6)-dimethylallyladenosine synthase (472 aa).

One can recognise an MTTase N-terminal domain in the interval 22-142 (RKVFVKTYGC…LPDALKRARA (121 aa)). Cys31, Cys67, Cys105, Cys183, Cys187, and Cys190 together coordinate [4Fe-4S] cluster. Residues 169 to 403 (RARGVTAFLT…LLVKQQRGFA (235 aa)) enclose the Radical SAM core domain. Residues 404 to 466 (EACVGREIDL…PNSLFAEMIG (63 aa)) form the TRAM domain.

Belongs to the methylthiotransferase family. MiaB subfamily. Monomer. The cofactor is [4Fe-4S] cluster.

It is found in the cytoplasm. It catalyses the reaction N(6)-dimethylallyladenosine(37) in tRNA + (sulfur carrier)-SH + AH2 + 2 S-adenosyl-L-methionine = 2-methylsulfanyl-N(6)-dimethylallyladenosine(37) in tRNA + (sulfur carrier)-H + 5'-deoxyadenosine + L-methionine + A + S-adenosyl-L-homocysteine + 2 H(+). Functionally, catalyzes the methylthiolation of N6-(dimethylallyl)adenosine (i(6)A), leading to the formation of 2-methylthio-N6-(dimethylallyl)adenosine (ms(2)i(6)A) at position 37 in tRNAs that read codons beginning with uridine. In Rhizobium meliloti (strain 1021) (Ensifer meliloti), this protein is tRNA-2-methylthio-N(6)-dimethylallyladenosine synthase.